Reading from the N-terminus, the 158-residue chain is MLP-like protein 43 (158 aa).

At Ala2 the chain carries N-acetylalanine.

The protein belongs to the MLP family.

The protein is MLP-like protein 43 (MLP43) of Arabidopsis thaliana (Mouse-ear cress).